The primary structure comprises 506 residues: 2,3-bisphosphoglycerate-independent phosphoglycerate mutase (506 aa).

The Mn(2+) site is built by Asp-13 and Ser-63. The Phosphoserine intermediate role is filled by Ser-63. Residues His-124, 153–154 (RD), Arg-183, Arg-189, 254–257 (RADR), and Lys-330 contribute to the substrate site. Mn(2+) contacts are provided by Asp-396, His-400, Asp-437, His-438, and His-456.

Belongs to the BPG-independent phosphoglycerate mutase family. As to quaternary structure, monomer. Mn(2+) serves as cofactor.

The enzyme catalyses (2R)-2-phosphoglycerate = (2R)-3-phosphoglycerate. It participates in carbohydrate degradation; glycolysis; pyruvate from D-glyceraldehyde 3-phosphate: step 3/5. Catalyzes the interconversion of 2-phosphoglycerate and 3-phosphoglycerate. This Cereibacter sphaeroides (strain ATCC 17023 / DSM 158 / JCM 6121 / CCUG 31486 / LMG 2827 / NBRC 12203 / NCIMB 8253 / ATH 2.4.1.) (Rhodobacter sphaeroides) protein is 2,3-bisphosphoglycerate-independent phosphoglycerate mutase.